A 73-amino-acid chain; its full sequence is Conotoxin ArMKLT2-022 (73 aa).

The first 22 residues, 1-22 (MKLTCVLIIAVLFLTACQLTTG), serve as a signal peptide directing secretion. A propeptide spanning residues 23 to 40 (EQKDHAQRSADRNSKLTR) is cleaved from the precursor. Q41 bears the Pyrrolidone carboxylic acid mark. Intrachain disulfides connect C42–C56, C49–C60, and C55–C67.

It belongs to the conotoxin O1 superfamily. In terms of tissue distribution, expressed by the venom duct.

Its subcellular location is the secreted. The protein is Conotoxin ArMKLT2-022 of Conus arenatus (Sand-dusted cone).